The following is a 357-amino-acid chain: Dynein axonemal assembly factor 10 (357 aa).

WD repeat units follow at residues 63 to 105, 115 to 154, 162 to 205, 207 to 249, 257 to 297, and 319 to 357; these read EKAK…MPVY, NAID…DPVA, ENKR…LRWE, NIKN…PTKG, AHKS…QRSK, and LSTQ…LNKI.

In terms of assembly, component of the PAQosome complex which is responsible for the biogenesis of several protein complexes and which consists of R2TP complex members RUVBL1, RUVBL2, RPAP3 and PIH1D1, URI complex members PFDN2, PFDN6, PDRG1, UXT and URI1 as well as ASDURF, POLR2E and DNAAF10/WDR92. Interacts with PIH1D1; the interaction associates DNAAF10 with the R2TP complex. Interacts with several dynein axonemal assembly factors. As to expression, widely expressed with the highest expression in testis.

It localises to the dynein axonemal particle. Its function is as follows. Key assembly factor specifically required for the stability of axonemal dynein heavy chains in cytoplasm. The protein is Dynein axonemal assembly factor 10 of Homo sapiens (Human).